The sequence spans 205 residues: Probable thymidylate kinase (205 aa).

ATP is bound at residue 7-14 (GIDGAGKS).

The protein belongs to the thymidylate kinase family.

The catalysed reaction is dTMP + ATP = dTDP + ADP. In Thermococcus kodakarensis (strain ATCC BAA-918 / JCM 12380 / KOD1) (Pyrococcus kodakaraensis (strain KOD1)), this protein is Probable thymidylate kinase.